A 504-amino-acid chain; its full sequence is Pyruvate kinase (504 aa).

Arg53 contributes to the substrate binding site. Residues Asn55, Ser57, Asp88, and Thr89 each coordinate K(+). An ATP-binding site is contributed by 55-58 (NFSH). ATP is bound by residues Arg95 and Lys181. Glu246 is a Mg(2+) binding site. Residues Gly269, Asp270, and Thr302 each contribute to the substrate site. Asp270 contacts Mg(2+).

The protein belongs to the pyruvate kinase family. As to quaternary structure, homotetramer. The cofactor is Mg(2+). K(+) serves as cofactor.

It catalyses the reaction pyruvate + ATP = phosphoenolpyruvate + ADP + H(+). Its pathway is carbohydrate degradation; glycolysis; pyruvate from D-glyceraldehyde 3-phosphate: step 5/5. This is Pyruvate kinase (PYK1) from Debaryomyces hansenii (strain ATCC 36239 / CBS 767 / BCRC 21394 / JCM 1990 / NBRC 0083 / IGC 2968) (Yeast).